We begin with the raw amino-acid sequence, 360 residues long: Probable dual-specificity RNA methyltransferase RlmN (360 aa).

Glu-97 (proton acceptor) is an active-site residue. The region spanning 103–330 (DGDRLTFCIS…TAVRRSRGLD (228 aa)) is the Radical SAM core domain. Cys-110 and Cys-335 are disulfide-bonded. Residues Cys-117, Cys-121, and Cys-124 each coordinate [4Fe-4S] cluster. S-adenosyl-L-methionine-binding positions include 165 to 166 (GE), Ser-197, 220 to 222 (SIH), and His-292. The S-methylcysteine intermediate role is filled by Cys-335.

The protein belongs to the radical SAM superfamily. RlmN family. It depends on [4Fe-4S] cluster as a cofactor.

Its subcellular location is the cytoplasm. The catalysed reaction is adenosine(2503) in 23S rRNA + 2 reduced [2Fe-2S]-[ferredoxin] + 2 S-adenosyl-L-methionine = 2-methyladenosine(2503) in 23S rRNA + 5'-deoxyadenosine + L-methionine + 2 oxidized [2Fe-2S]-[ferredoxin] + S-adenosyl-L-homocysteine. It catalyses the reaction adenosine(37) in tRNA + 2 reduced [2Fe-2S]-[ferredoxin] + 2 S-adenosyl-L-methionine = 2-methyladenosine(37) in tRNA + 5'-deoxyadenosine + L-methionine + 2 oxidized [2Fe-2S]-[ferredoxin] + S-adenosyl-L-homocysteine. Its function is as follows. Specifically methylates position 2 of adenine 2503 in 23S rRNA and position 2 of adenine 37 in tRNAs. This is Probable dual-specificity RNA methyltransferase RlmN from Gemmatimonas aurantiaca (strain DSM 14586 / JCM 11422 / NBRC 100505 / T-27).